Reading from the N-terminus, the 376-residue chain is Riboflavin biosynthesis protein RibD (376 aa).

Positions 1–150 (MEDFSEQQLF…QPYLYQRTHN (150 aa)) are deaminase. The 123-residue stretch at 6–128 (EQQLFFMRRA…MLRQAGIQVY (123 aa)) folds into the CMP/dCMP-type deaminase domain. Histidine 55 lines the Zn(2+) pocket. Residue glutamate 57 is the Proton donor of the active site. Residues cysteine 80 and cysteine 89 each coordinate Zn(2+). The reductase stretch occupies residues 151–376 (FPWTILKSAA…SPQVFEPIRN (226 aa)). NADP(+) is bound at residue alanine 159. Serine 173 provides a ligand contact to substrate. Tryptophan 175 provides a ligand contact to NADP(+). Arginine 189 is a binding site for substrate. NADP(+) is bound by residues threonine 201 and aspartate 205. The substrate site is built by leucine 209 and arginine 212. Serine 230 is a binding site for NADP(+). Glutamate 300 is a substrate binding site. NADP(+) is bound at residue 302 to 308 (GTTLHTS).

The protein in the N-terminal section; belongs to the cytidine and deoxycytidylate deaminase family. In the C-terminal section; belongs to the HTP reductase family. Zn(2+) is required as a cofactor.

It carries out the reaction 2,5-diamino-6-hydroxy-4-(5-phosphoribosylamino)-pyrimidine + H2O + H(+) = 5-amino-6-(5-phospho-D-ribosylamino)uracil + NH4(+). It catalyses the reaction 5-amino-6-(5-phospho-D-ribitylamino)uracil + NADP(+) = 5-amino-6-(5-phospho-D-ribosylamino)uracil + NADPH + H(+). It participates in cofactor biosynthesis; riboflavin biosynthesis; 5-amino-6-(D-ribitylamino)uracil from GTP: step 2/4. Its pathway is cofactor biosynthesis; riboflavin biosynthesis; 5-amino-6-(D-ribitylamino)uracil from GTP: step 3/4. In terms of biological role, converts 2,5-diamino-6-(ribosylamino)-4(3h)-pyrimidinone 5'-phosphate into 5-amino-6-(ribosylamino)-2,4(1h,3h)-pyrimidinedione 5'-phosphate. This chain is Riboflavin biosynthesis protein RibD (ribD), found in Chlamydia pneumoniae (Chlamydophila pneumoniae).